Here is a 285-residue protein sequence, read N- to C-terminus: Formamidopyrimidine-DNA glycosylase (285 aa).

Pro-2 serves as the catalytic Schiff-base intermediate with DNA. Catalysis depends on Glu-3, which acts as the Proton donor. Lys-61 (proton donor; for beta-elimination activity) is an active-site residue. DNA contacts are provided by His-102, Arg-121, and Lys-163. The FPG-type zinc-finger motif lies at 249–283 (NAYGQAGKPCARCGTPIARETFMNRGSHFCNRCQK). Arg-273 functions as the Proton donor; for delta-elimination activity in the catalytic mechanism.

Belongs to the FPG family. As to quaternary structure, monomer. The cofactor is Zn(2+).

The enzyme catalyses Hydrolysis of DNA containing ring-opened 7-methylguanine residues, releasing 2,6-diamino-4-hydroxy-5-(N-methyl)formamidopyrimidine.. It carries out the reaction 2'-deoxyribonucleotide-(2'-deoxyribose 5'-phosphate)-2'-deoxyribonucleotide-DNA = a 3'-end 2'-deoxyribonucleotide-(2,3-dehydro-2,3-deoxyribose 5'-phosphate)-DNA + a 5'-end 5'-phospho-2'-deoxyribonucleoside-DNA + H(+). Involved in base excision repair of DNA damaged by oxidation or by mutagenic agents. Acts as a DNA glycosylase that recognizes and removes damaged bases. Has a preference for oxidized purines, such as 7,8-dihydro-8-oxoguanine (8-oxoG). Has AP (apurinic/apyrimidinic) lyase activity and introduces nicks in the DNA strand. Cleaves the DNA backbone by beta-delta elimination to generate a single-strand break at the site of the removed base with both 3'- and 5'-phosphates. This chain is Formamidopyrimidine-DNA glycosylase, found in Corynebacterium efficiens (strain DSM 44549 / YS-314 / AJ 12310 / JCM 11189 / NBRC 100395).